A 560-amino-acid polypeptide reads, in one-letter code: MSETVTQTETDQRPATARSLGAEEKEAKSDEQFQQERTIKGFRWFIVIISILSSVTLYSLDNTIVADIQPQIINTFDELDKLPWLSVAFLVACVATNSIWSKIYSQLNAKWLYLFCVVLFEVGSAMCGAAPTINTLIGGRALAGLGGAGLYVGVMTLLSVNTTKRERPMYIGMTGLTWGVGTVLGPIVGGGFAVSKVGWRWSFYINLFFAAVAIPIYLFMLPSFDPRPGVSYKERLAQLDYLGTILMIGACVSGVMAINFGGQIYPWDSGQTISCFVVSGVLFIVFGLQQWYCIGTTKENRTFPCQFLARPAFIILFVQTASVATVFFVPIYFVPLFFQFTRNDSAIDAGVRLLPLVCFIVAAMILNGALMSKFGYYMPWYLVGGCLSLVGSVLMYTIKLGTSTANIYGYMIILGVGGGMYAQASFAVAQGKARPREIPVATGFISLAQLTGGTIALAIANSVFLEKASAGIMAVVPDASKETVQSAISGASSSFFQTLDPDVREAVLAAVTHAISQVYILPITGAAMSISLAIFMPREKLFVASDTGDRDGVTPLGAMG.

The disordered stretch occupies residues 1–32; sequence MSETVTQTETDQRPATARSLGAEEKEAKSDEQ. The segment covering 21–31 has biased composition (basic and acidic residues); it reads GAEEKEAKSDE. 8 helical membrane-spanning segments follow: residues 45 to 65, 84 to 104, 111 to 131, 141 to 161, 174 to 194, 201 to 221, 242 to 262, and 275 to 295; these read FIVIISILSSVTLYSLDNTIV, WLSVAFLVACVATNSIWSKIY, WLYLFCVVLFEVGSAMCGAAP, ALAGLGGAGLYVGVMTLLSVN, TGLTWGVGTVLGPIVGGGFAV, WSFYINLFFAAVAIPIYLFML, LGTILMIGACVSGVMAINFGG, and CFVVSGVLFIVFGLQQWYCIG. An N-linked (GlcNAc...) asparagine glycan is attached at Asn-300. Residues 313-333 form a helical membrane-spanning segment; it reads FIILFVQTASVATVFFVPIYF. The N-linked (GlcNAc...) asparagine glycan is linked to Asn-343. Helical transmembrane passes span 346–366, 378–398, 409–429, 440–460, and 515–535; these read AIDAGVRLLPLVCFIVAAMIL, MPWYLVGGCLSLVGSVLMYTI, GYMIILGVGGGMYAQASFAVA, VATGFISLAQLTGGTIALAIA, and ISQVYILPITGAAMSISLAIF.

This sequence belongs to the major facilitator superfamily. TCR/Tet family.

The protein resides in the membrane. MFS-type transporter; part of the gene cluster that mediates the biosynthesis of pleosporalin A, ascomycone A, as well as a third cryptic naphthoquinone derived pigment, all responsible for the coloration of conidia. Seems not to be involved in pigment biosynthesis although its expression is regulated by the cluster-specific transcription factor pgmR. The polypeptide is MFS-type transporter pgmG (Aspergillus terreus).